The chain runs to 487 residues: Serine/threonine-protein kinase 4 (487 aa).

M1 is modified (N-acetylmethionine). Residue T3 is modified to Phosphothreonine. Positions 30-281 (FDVLEKLGEG…ATQLLQHPFV (252 aa)) constitute a Protein kinase domain. Residues 36-44 (LGEGSYGSV) and K59 each bind ATP. Residue D149 is the Proton acceptor of the active site. A Phosphothreonine; by autocatalysis modification is found at T183. S265 bears the Phosphoserine mark. The stretch at 290–310 (LRDLINEAMDVKLKRQESQQR) forms a coiled coil. A compositionally biased stretch (basic and acidic residues) spans 303 to 312 (KRQESQQREV). The segment at 303-332 (KRQESQQREVDQDDEENSEEDEMDSGTMVR) is disordered. Residues 313-326 (DQDDEENSEEDEMD) are compositionally biased toward acidic residues. S320 carries the post-translational modification Phosphoserine. Residues T340 and T367 each carry the phosphothreonine modification. T387 bears the Phosphothreonine; by PKB/AKT1 mark. S410 and S414 each carry phosphoserine. Residue Y433 is modified to Phosphotyrosine. In terms of domain architecture, SARAH spans 433-480 (YEFLKSWTVEDLQKRLLALDPMMEQEIEEIRQKYQSKRQPILDAIEAK).

The protein belongs to the protein kinase superfamily. STE Ser/Thr protein kinase family. STE20 subfamily. As to quaternary structure, homodimer; mediated via the coiled-coil region. Interacts with NORE1, which inhibits autoactivation. Interacts with and stabilizes SAV1. Interacts with RASSF1. Interacts with FOXO3. Interacts with RASSF2 (via SARAH domain). Interacts with AR, PKB/AKT1, TNNI3 and SIRT1. Interacts with DLG5 (via PDZ domain 3). Interacts with MARK3 and SCRIB in the presence of DLG5. Mg(2+) is required as a cofactor. In terms of processing, autophosphorylated on serine and threonine residues. Phosphorylation at Thr-387 by PKB/AKT1, leads to inhibition of its: kinase activity, nuclear translocation and autophosphorylation at Thr-183. It also diminishes its cleavage by caspases and its ability to phosphorylate FOXO3. Post-translationally, proteolytically cleaved by caspase-3 during apoptosis at Asp-326 and Asp-349 resulting in a 37 kDa or a 39 kDa subunit respectively. The 39 kDa subunit is further cleaved into the 37 kDa form. Proteolytic cleavage results in kinase activation and nuclear translocation of the truncated form (MST1/N). It is less likely that cleavage at Asp-349 is a prerequisite for activation as this site is not conserved in the murine ortholog.

The protein resides in the cytoplasm. It is found in the nucleus. It carries out the reaction L-seryl-[protein] + ATP = O-phospho-L-seryl-[protein] + ADP + H(+). It catalyses the reaction L-threonyl-[protein] + ATP = O-phospho-L-threonyl-[protein] + ADP + H(+). Its activity is regulated as follows. Inhibited by the C-terminal non-catalytic region. Activated by caspase-cleavage. Full activation also requires homodimerization and autophosphorylation of Thr-183. Activated by RASSF1 which acts by preventing its dephosphorylation. In terms of biological role, stress-activated, pro-apoptotic kinase which, following caspase-cleavage, enters the nucleus and induces chromatin condensation followed by internucleosomal DNA fragmentation. Key component of the Hippo signaling pathway which plays a pivotal role in organ size control and tumor suppression by restricting proliferation and promoting apoptosis. The core of this pathway is composed of a kinase cascade wherein STK3/MST2 and STK4/MST1, in complex with its regulatory protein SAV1, phosphorylates and activates LATS1/2 in complex with its regulatory protein MOB1, which in turn phosphorylates and inactivates YAP1 oncoprotein and WWTR1/TAZ. Phosphorylation of YAP1 by LATS2 inhibits its translocation into the nucleus to regulate cellular genes important for cell proliferation, cell death, and cell migration. STK3/MST2 and STK4/MST1 are required to repress proliferation of mature hepatocytes, to prevent activation of facultative adult liver stem cells (oval cells), and to inhibit tumor formation. Phosphorylates 'Ser-14' of histone H2B (H2BS14ph) during apoptosis. Phosphorylates FOXO3 upon oxidative stress, which results in its nuclear translocation and cell death initiation. Phosphorylates MOBKL1A, MOBKL1B and RASSF2. Phosphorylates TNNI3 (cardiac Tn-I) and alters its binding affinity to TNNC1 (cardiac Tn-C) and TNNT2 (cardiac Tn-T). Phosphorylates FOXO1 on 'Ser-212' and regulates its activation and stimulates transcription of PMAIP1 in a FOXO1-dependent manner. Phosphorylates SIRT1 and inhibits SIRT1-mediated p53/TP53 deacetylation, thereby promoting p53/TP53 dependent transcription and apoptosis upon DNA damage. Acts as an inhibitor of PKB/AKT1. Phosphorylates AR on 'Ser-650' and suppresses its activity by intersecting with PKB/AKT1 signaling and antagonizing formation of AR-chromatin complexes. The protein is Serine/threonine-protein kinase 4 (STK4) of Colobus guereza (Mantled guereza).